The sequence spans 227 residues: PKHD-type hydroxylase Swit_4046 (227 aa).

The region spanning 78–178 (KVFPPLFNLY…RLCSFFWIQS (101 aa)) is the Fe2OG dioxygenase domain. H96, D98, and H159 together coordinate Fe cation. R169 contributes to the 2-oxoglutarate binding site.

Requires Fe(2+) as cofactor. L-ascorbate serves as cofactor.

The protein is PKHD-type hydroxylase Swit_4046 of Rhizorhabdus wittichii (strain DSM 6014 / CCUG 31198 / JCM 15750 / NBRC 105917 / EY 4224 / RW1) (Sphingomonas wittichii).